Reading from the N-terminus, the 198-residue chain is Protein GrpE (198 aa).

It belongs to the GrpE family. Homodimer.

The protein localises to the cytoplasm. Participates actively in the response to hyperosmotic and heat shock by preventing the aggregation of stress-denatured proteins, in association with DnaK and GrpE. It is the nucleotide exchange factor for DnaK and may function as a thermosensor. Unfolded proteins bind initially to DnaJ; upon interaction with the DnaJ-bound protein, DnaK hydrolyzes its bound ATP, resulting in the formation of a stable complex. GrpE releases ADP from DnaK; ATP binding to DnaK triggers the release of the substrate protein, thus completing the reaction cycle. Several rounds of ATP-dependent interactions between DnaJ, DnaK and GrpE are required for fully efficient folding. This chain is Protein GrpE, found in Actinobacillus pleuropneumoniae serotype 7 (strain AP76).